Consider the following 596-residue polypeptide: Transcription factor IIIB 70 kDa subunit (596 aa).

The segment at 1–33 (MPVCKNCHGTEFERDLSNANNDLVCKACGVVSE) adopts a TFIIB-type zinc-finger fold. The Zn(2+) site is built by cysteine 4, cysteine 7, cysteine 25, and cysteine 28. Tandem repeats lie at residues 90–166 (VSYA…KMVK) and 185–264 (FAEK…EFKN). 2 disordered regions span residues 363–421 (GENI…NESG) and 509–534 (IATG…EPTK). Over residues 365–375 (NIYHEGSENET) the composition is skewed to basic and acidic residues. 2 positions are modified to phosphoserine: serine 381 and serine 384. The segment covering 388–421 (EHVEGEDKETEGTEEKVKKVKTKTSEEKKENESG) has biased composition (basic and acidic residues). Basic residues predominate over residues 516 to 526 (VKKKRTRRRNN).

It belongs to the TFIIB family. TFIIIB comprises the TATA-binding protein (TBP), the B-related factor (BRF) and the B' component (TFC5).

The protein localises to the nucleus. Functionally, general activator of RNA polymerase III transcription. Interacts with TBP. Binds to Pol III subunit C34 and to the TAU135 component of TFIIIC. The chain is Transcription factor IIIB 70 kDa subunit (BRF1) from Saccharomyces cerevisiae (strain ATCC 204508 / S288c) (Baker's yeast).